The sequence spans 461 residues: L-seryl-tRNA(Sec) selenium transferase (461 aa).

K294 carries the post-translational modification N6-(pyridoxal phosphate)lysine.

This sequence belongs to the SelA family. It depends on pyridoxal 5'-phosphate as a cofactor.

The protein resides in the cytoplasm. The enzyme catalyses L-seryl-tRNA(Sec) + selenophosphate + H(+) = L-selenocysteinyl-tRNA(Sec) + phosphate. It participates in aminoacyl-tRNA biosynthesis; selenocysteinyl-tRNA(Sec) biosynthesis; selenocysteinyl-tRNA(Sec) from L-seryl-tRNA(Sec) (bacterial route): step 1/1. In terms of biological role, converts seryl-tRNA(Sec) to selenocysteinyl-tRNA(Sec) required for selenoprotein biosynthesis. In Haemophilus influenzae (strain PittEE), this protein is L-seryl-tRNA(Sec) selenium transferase.